The primary structure comprises 405 residues: MSKKVNKNASPKNNSDSESKTIIYRPNTIDCDRIDIADWNKDGKQWNAWLNYQDPNLNSNTKILLQTKTIELKHHGIPRIGEGEDAFIKSDADREYIKIPLTPGEPGCEELEQQFQALDEYFSSDEMRTKLFGKRANGYKYVTCVKTPKIKDESDSDSDDEDTKKKKKNTKNKGKQEGPPVKYIKAKFHMIQDNGKKINRTKLIKSSGGKKEEVNADTVTEIANEVRFLSKTKYIMHVNRIWAAKSVLLGADKKMYSLGVKVMAIEYTPGASTGLNSKNLAFMSDDEDEEEVVKPTKSPNKSSQKQKQKLDSDDEDSDNEKEKEKEEDDEEEHKSSNKSSNKKSKKQDDDEDDEEEGEKIEVKKSSKKSSKKASKKQDSDEEDEEEVAKPKKKSSKAKSPSKSRS.

Disordered stretches follow at residues 1–21 (MSKKVNKNASPKNNSDSESKT), 150–179 (IKDESDSDSDDEDTKKKKKNTKNKGKQEGP), and 285–405 (DDED…KSRS). Residues 7 to 16 (KNASPKNNSD) are compositionally biased toward polar residues. 2 stretches are compositionally biased toward acidic residues: residues 312–331 (SDDEDSDNEKEKEKEEDDEE) and 349–358 (DDEDDEEEGE). Composition is skewed to basic residues over residues 365–374 (SSKKSSKKAS) and 390–405 (PKKKSSKAKSPSKSRS).

This is an uncharacterized protein from Acanthamoeba polyphaga (Amoeba).